The primary structure comprises 32 residues: Peptide II.10.10 (32 aa).

Cystine bridges form between C5-C24, C10-C29, and C14-C31.

The protein belongs to the short scorpion toxin superfamily. Potassium channel inhibitor family. Alpha-KTx 10 subfamily. Expressed by the venom gland.

The protein resides in the secreted. The sequence is that of Peptide II.10.10 from Centruroides tecomanus (Scorpion).